Here is a 661-residue protein sequence, read N- to C-terminus: COBRA-like protein 7 (661 aa).

A signal peptide spans 1 to 26 (MDSAPNFIPRLLLLSLLIVSIPLTSS). The tract at residues 26 to 45 (SQSDANTTNPSPSPPSDSDL) is disordered. 14 N-linked (GlcNAc...) asparagine glycosylation sites follow: Asn31, Asn64, Asn122, Asn170, Asn314, Asn327, Asn356, Asn369, Asn398, Asn410, Asn430, Asn472, Asn551, and Asn561. A lipid anchor (GPI-anchor amidated serine) is attached at Ser637. Positions 638–661 (SQHRKHISVFLLALPVLALLILRA) are cleaved as a propeptide — removed in mature form.

The protein belongs to the COBRA family. As to expression, expressed in roots, stems, leaves, flowers and siliques.

The protein localises to the cell membrane. This is COBRA-like protein 7 (COBL7) from Arabidopsis thaliana (Mouse-ear cress).